Reading from the N-terminus, the 448-residue chain is 4-hydroxybenzoate transporter PcaK (448 aa).

Topologically, residues 1–30 (MNSPSLPAVERLDVQAFINAQPLSPYQWRI) are cytoplasmic. The chain crosses the membrane as a helical span at residues 31 to 51 (VLLCFLIVFLDGLDTAAMGFI). At 52 to 67 (APALTQDWGIDRASLG) the chain is on the periplasmic side. Residues 68–88 (PVMSAALIGMVFGALGSGPLA) traverse the membrane as a helical segment. At 89–94 (DRYGRK) the chain is on the cytoplasmic side. Residues 95–115 (LVLVAAVFLFGLFSLASAYST) form a helical membrane-spanning segment. The Periplasmic portion of the chain corresponds to 116–119 (NVEQ). A helical transmembrane segment spans residues 120–140 (LLALRFLTGLGLGAAMPNATT). Residues 141–152 (LLSEYTPERLKS) lie on the Cytoplasmic side of the membrane. The helical transmembrane segment at 153-173 (LLVTSMFCGFNLGMACGGFVS) threads the bilayer. Over 174–184 (AKLIPLFGWHS) the chain is Periplasmic. Residues 185–205 (LLLLGGLLPLVLAVVLLFRLP) form a helical membrane-spanning segment. The Cytoplasmic segment spans residues 206–261 (ESARYLVVRNRGSERVRQVLAPIAPAQVALARSFHVPEQQTVQARNVFAVIFSGTY). A helical membrane pass occupies residues 262–282 (SAGTLLLWLTYFMGLVIVYLL). Topologically, residues 283–301 (TSWLPTLMRDSGASLEQAA) are periplasmic. The chain crosses the membrane as a helical span at residues 302–322 (FIGALFQFGGVLSAVAVGWAM). The Cytoplasmic segment spans residues 323-329 (DRFNPHK). The helical transmembrane segment at 330-350 (VIGLFYLLAGVFAWCVGQSLG) threads the bilayer. A topological domain (periplasmic) is located at residue Gln-351. A helical membrane pass occupies residues 352–372 (VTLLATLVLLAGMCINGAQSA). Residues 373-398 (MPSLAARFYPTQGRATGVSWMLGIGR) lie on the Cytoplasmic side of the membrane. Residues 399–419 (FGAILGAWIGATLLGLGWNFE) traverse the membrane as a helical segment. Residues 420 to 421 (QV) lie on the Periplasmic side of the membrane. A helical membrane pass occupies residues 422–442 (LTALVLPAALATAAVLLKGLV). Over 443-448 (SHADAG) the chain is Cytoplasmic.

Belongs to the major facilitator superfamily. Aromatic acid:H(+) symporter (AAHS) (TC 2.A.1.15) family.

It is found in the cell inner membrane. Transports 4-hydroxybenzoate (4-HBA) and protocatechuate across the membrane. Driven by the proton motive force. Also functions as a chemoreceptor, which is required for chemotaxis to aromatic acids. In Pseudomonas aeruginosa (strain ATCC 15692 / DSM 22644 / CIP 104116 / JCM 14847 / LMG 12228 / 1C / PRS 101 / PAO1), this protein is 4-hydroxybenzoate transporter PcaK (pcaK).